The following is a 239-amino-acid chain: Ribonuclease PH (239 aa).

Residues Arg-87 and 125-127 (GTR) each bind phosphate.

It belongs to the RNase PH family. In terms of assembly, homohexameric ring arranged as a trimer of dimers.

It carries out the reaction tRNA(n+1) + phosphate = tRNA(n) + a ribonucleoside 5'-diphosphate. Phosphorolytic 3'-5' exoribonuclease that plays an important role in tRNA 3'-end maturation. Removes nucleotide residues following the 3'-CCA terminus of tRNAs; can also add nucleotides to the ends of RNA molecules by using nucleoside diphosphates as substrates, but this may not be physiologically important. Probably plays a role in initiation of 16S rRNA degradation (leading to ribosome degradation) during starvation. In Cellvibrio japonicus (strain Ueda107) (Pseudomonas fluorescens subsp. cellulosa), this protein is Ribonuclease PH.